A 233-amino-acid chain; its full sequence is 7-cyano-7-deazaguanine synthase (233 aa).

An ATP-binding site is contributed by 18–28 (FSGGQDSTTCL). Zn(2+) contacts are provided by Cys-198, Cys-213, Cys-216, and Cys-219.

The protein belongs to the QueC family. It depends on Zn(2+) as a cofactor.

It carries out the reaction 7-carboxy-7-deazaguanine + NH4(+) + ATP = 7-cyano-7-deazaguanine + ADP + phosphate + H2O + H(+). Its pathway is purine metabolism; 7-cyano-7-deazaguanine biosynthesis. Catalyzes the ATP-dependent conversion of 7-carboxy-7-deazaguanine (CDG) to 7-cyano-7-deazaguanine (preQ(0)). The sequence is that of 7-cyano-7-deazaguanine synthase from Wolinella succinogenes (strain ATCC 29543 / DSM 1740 / CCUG 13145 / JCM 31913 / LMG 7466 / NCTC 11488 / FDC 602W) (Vibrio succinogenes).